The sequence spans 64 residues: Beta-defensin 5 (64 aa).

The first 22 residues, 1-22 (MRLHHLLLVLLFLVLSAGSGFT), serve as a signal peptide directing secretion. Gln23 bears the Pyrrolidone carboxylic acid mark. 3 disulfides stabilise this stretch: Cys31–Cys60, Cys38–Cys53, and Cys43–Cys61.

This sequence belongs to the beta-defensin family. As to expression, neutrophilic granules. Alveolar macrophages.

It is found in the secreted. Functionally, has bactericidal activity. Active against E.coli ML35 but not against S.aureus 502A. In Bos taurus (Bovine), this protein is Beta-defensin 5 (DEFB5).